Reading from the N-terminus, the 179-residue chain is Endoribonuclease YbeY (179 aa).

Zn(2+)-binding residues include His148, His152, and His158.

The protein belongs to the endoribonuclease YbeY family. Zn(2+) is required as a cofactor.

It localises to the cytoplasm. Functionally, single strand-specific metallo-endoribonuclease involved in late-stage 70S ribosome quality control and in maturation of the 3' terminus of the 16S rRNA. The sequence is that of Endoribonuclease YbeY from Prochlorococcus marinus (strain MIT 9215).